Consider the following 948-residue polypeptide: RNA polymerase-associated protein RapA (948 aa).

Residues 164–332 (EVADRSAPRV…FARLRLLDPN (169 aa)) form the Helicase ATP-binding domain. 177–184 (DEVGLGKT) is a binding site for ATP. The DEAH box signature appears at 278–281 (DEAH). The Helicase C-terminal domain occupies 473–627 (RVDWLIDTLK…TCPTGNALQH (155 aa)).

Belongs to the SNF2/RAD54 helicase family. RapA subfamily. Interacts with the RNAP. Has a higher affinity for the core RNAP than for the holoenzyme. Its ATPase activity is stimulated by binding to RNAP.

In terms of biological role, transcription regulator that activates transcription by stimulating RNA polymerase (RNAP) recycling in case of stress conditions such as supercoiled DNA or high salt concentrations. Probably acts by releasing the RNAP, when it is trapped or immobilized on tightly supercoiled DNA. Does not activate transcription on linear DNA. Probably not involved in DNA repair. The protein is RNA polymerase-associated protein RapA of Pseudomonas putida (strain ATCC 700007 / DSM 6899 / JCM 31910 / BCRC 17059 / LMG 24140 / F1).